We begin with the raw amino-acid sequence, 70 residues long: uncharacterized protein (70 aa).

This is an uncharacterized protein from Saccharomyces cerevisiae (strain ATCC 204508 / S288c) (Baker's yeast).